A 333-amino-acid chain; its full sequence is Biotin synthase (333 aa).

Residues 47–276 form the Radical SAM core domain; it reads FFKNQMEFCS…KSEIRLCGGR (230 aa). Cys-65, Cys-69, and Cys-72 together coordinate [4Fe-4S] cluster. [2Fe-2S] cluster contacts are provided by Cys-109, Cys-141, Cys-201, and Arg-271.

This sequence belongs to the radical SAM superfamily. Biotin synthase family. Homodimer. [4Fe-4S] cluster serves as cofactor. The cofactor is [2Fe-2S] cluster.

The catalysed reaction is (4R,5S)-dethiobiotin + (sulfur carrier)-SH + 2 reduced [2Fe-2S]-[ferredoxin] + 2 S-adenosyl-L-methionine = (sulfur carrier)-H + biotin + 2 5'-deoxyadenosine + 2 L-methionine + 2 oxidized [2Fe-2S]-[ferredoxin]. It participates in cofactor biosynthesis; biotin biosynthesis; biotin from 7,8-diaminononanoate: step 2/2. Functionally, catalyzes the conversion of dethiobiotin (DTB) to biotin by the insertion of a sulfur atom into dethiobiotin via a radical-based mechanism. The polypeptide is Biotin synthase (Sulfurihydrogenibium sp. (strain YO3AOP1)).